Reading from the N-terminus, the 330-residue chain is Phospho-N-acetylmuramoyl-pentapeptide-transferase (330 aa).

Helical transmembrane passes span 3 to 23 (SVVL…SSFI), 49 to 69 (TPTM…AVVA), 71 to 91 (PNPA…VGLY), 111 to 131 (FLLL…YVGV), 145 to 165 (VLGP…FVIV), 179 to 199 (GLAA…AFLE), 204 to 224 (LAII…YNSH), 228 to 248 (IFMG…AAIL), 256 to 276 (PVIG…VVVF), and 307 to 327 (FWIV…FFLY).

It belongs to the glycosyltransferase 4 family. MraY subfamily. It depends on Mg(2+) as a cofactor.

It localises to the cell membrane. It catalyses the reaction UDP-N-acetyl-alpha-D-muramoyl-L-alanyl-gamma-D-glutamyl-meso-2,6-diaminopimeloyl-D-alanyl-D-alanine + di-trans,octa-cis-undecaprenyl phosphate = di-trans,octa-cis-undecaprenyl diphospho-N-acetyl-alpha-D-muramoyl-L-alanyl-D-glutamyl-meso-2,6-diaminopimeloyl-D-alanyl-D-alanine + UMP. It participates in cell wall biogenesis; peptidoglycan biosynthesis. Its function is as follows. Catalyzes the initial step of the lipid cycle reactions in the biosynthesis of the cell wall peptidoglycan: transfers peptidoglycan precursor phospho-MurNAc-pentapeptide from UDP-MurNAc-pentapeptide onto the lipid carrier undecaprenyl phosphate, yielding undecaprenyl-pyrophosphoryl-MurNAc-pentapeptide, known as lipid I. The chain is Phospho-N-acetylmuramoyl-pentapeptide-transferase from Rubrobacter xylanophilus (strain DSM 9941 / JCM 11954 / NBRC 16129 / PRD-1).